The chain runs to 289 residues: Palmitoyl-protein thioesterase 3 (289 aa).

The first 20 residues, 1–20 (MRILSSLILLIALAIALVSA), serve as a signal peptide directing secretion. Ser97 is a catalytic residue. N-linked (GlcNAc...) asparagine glycosylation is found at Asn189 and Asn195. Active-site residues include Asp210 and His266. Asn281 carries an N-linked (GlcNAc...) asparagine glycan.

This sequence belongs to the palmitoyl-protein thioesterase family.

Its subcellular location is the lysosome. It carries out the reaction S-hexadecanoyl-L-cysteinyl-[protein] + H2O = L-cysteinyl-[protein] + hexadecanoate + H(+). Removes thioester-linked fatty acyl groups such as palmitate from modified cysteine residues in proteins or peptides during lysosomal degradation. This Dictyostelium discoideum (Social amoeba) protein is Palmitoyl-protein thioesterase 3 (ppt3).